Here is a 594-residue protein sequence, read N- to C-terminus: Pentatricopeptide repeat-containing protein At1g15480, mitochondrial (594 aa).

A mitochondrion-targeting transit peptide spans Met1–Leu67. The span at Thr62 to Thr75 shows a compositional bias: low complexity. The segment at Thr62–Glu109 is disordered. The segment covering Thr95–Glu109 has biased composition (acidic residues). PPR repeat units follow at residues Gly226–Leu260, Ser261–Pro294, Asn295–Leu329, Asp330–Glu364, Ser432–Ile466, Gly467–Pro502, and Leu503–Ser537.

It belongs to the PPR family. P subfamily.

The protein localises to the mitochondrion. This Arabidopsis thaliana (Mouse-ear cress) protein is Pentatricopeptide repeat-containing protein At1g15480, mitochondrial.